Here is a 215-residue protein sequence, read N- to C-terminus: Small ribosomal subunit protein uS7 (215 aa).

The protein belongs to the universal ribosomal protein uS7 family. Part of the 30S ribosomal subunit.

In terms of biological role, one of the primary rRNA binding proteins, it binds directly to 16S rRNA where it nucleates assembly of the head domain of the 30S subunit. Is located at the subunit interface close to the decoding center. This is Small ribosomal subunit protein uS7 from Pyrococcus furiosus (strain ATCC 43587 / DSM 3638 / JCM 8422 / Vc1).